The primary structure comprises 456 residues: Phytase A (456 aa).

Positions 1–24 (MSSMASVLFAALAISGVQVTPSRG) are cleaved as a signal peptide. Positions 37, 38, 68, 69, 72, 75, and 152 each coordinate 1D-myo-inositol hexakisphosphate. 4 cysteine pairs are disulfide-bonded: Cys58–Cys396, Cys197–Cys450, Cys246–Cys264, and Cys421–Cys429. The Nucleophile role is filled by His69. Residue Lys283 participates in 1D-myo-inositol hexakisphosphate binding. Residue Asn317 is glycosylated (N-linked (GlcNAc...) asparagine). 2 residues coordinate 1D-myo-inositol hexakisphosphate: His343 and Asp344. N-linked (GlcNAc...) asparagine glycosylation is present at Asn358.

This sequence belongs to the histidine acid phosphatase family. Monomer.

The protein localises to the secreted. It catalyses the reaction 1D-myo-inositol hexakisphosphate + H2O = 1D-myo-inositol 1,2,4,5,6-pentakisphosphate + phosphate. It carries out the reaction 1D-myo-inositol 1,2,4,5,6-pentakisphosphate + H2O = 1D-myo-inositol 1,2,5,6-tetrakisphosphate + phosphate. The catalysed reaction is 1D-myo-inositol 1,2,5,6-tetrakisphosphate + H2O = 1D-myo-inositol 1,2,6-trisphosphate + phosphate. The enzyme catalyses 1D-myo-inositol 1,2,6-trisphosphate + H2O = 1D-myo-inositol 1,2-bisphosphate + phosphate. It catalyses the reaction 1D-myo-inositol 1,2-bisphosphate + H2O = 1D-myo-inositol 2-phosphate + phosphate. Functionally, catalyzes the phosphate monoester hydrolysis of phytic acid (myo-inositol hexakisphosphate), which results in the stepwise formation of myo-inositol pentakis-, tetrakis-, tris-, bis-, and monophosphates, as well as the liberation of inorganic phosphate. Myo-inositol 2-monophosphate is the end product. The polypeptide is Phytase A (Arthroderma benhamiae (strain ATCC MYA-4681 / CBS 112371) (Trichophyton mentagrophytes)).